The chain runs to 964 residues: Probable LRR receptor-like serine/threonine-protein kinase IRK (964 aa).

The first 20 residues, 1-20 (MYKALIFTVLLVSAVAPVRS), serve as a signal peptide directing secretion. The Extracellular segment spans residues 21–603 (LDPPLNDDVL…GHKRILLSIS (583 aa)). 11 LRR repeats span residues 92–116 (LQFL…MLLS), 117–141 (LVNL…FFRQ), 143–166 (GSLR…ISSC), 168–190 (SLAA…IWSL), 191–214 (NTLR…IDRL), 215–238 (NNLR…IGSC), 240–261 (LLKT…TFQQ), 263–286 (SLCY…IGEM), 287–310 (RSLE…IGNL), 312–334 (ALKV…TANC), and 335–358 (INLL…LFQD). N-linked (GlcNAc...) asparagine glycosylation occurs at Asn104. An N-linked (GlcNAc...) asparagine glycan is attached at Asn173. A glycan (N-linked (GlcNAc...) asparagine) is linked at Asn317. N-linked (GlcNAc...) asparagine glycosylation is present at Asn370. LRR repeat units follow at residues 375 to 399 (IKKI…LGDL), 400 to 423 (RDLE…IGEL), 425 to 447 (HLSV…TGGA), 448 to 471 (VSLE…IKNC), 472 to 495 (SSLR…LAKL), 496 to 519 (TRLE…LANL), and 521 to 544 (YLHT…IFNG). Residue Asn470 is glycosylated (N-linked (GlcNAc...) asparagine). Asn526, Asn562, and Asn578 each carry an N-linked (GlcNAc...) asparagine glycan. The chain crosses the membrane as a helical span at residues 604–624 (SLIAISAAAAIVVGVIAITVL). Residues 625–964 (NLRVRASTVS…SGSSDELGSS (340 aa)) are Cytoplasmic-facing. The 274-residue stretch at 678 to 951 (LNKDCELGRG…GEAVNILRMI (274 aa)) folds into the Protein kinase domain. Residues 684–692 (LGRGGFGAV) and Lys706 contribute to the ATP site.

Belongs to the protein kinase superfamily. Ser/Thr protein kinase family. As to quaternary structure, interacts with IRKI. In terms of processing, autophosphorylated. In terms of tissue distribution, highly expressed in root tips, shoot apices and developing flowers.

It localises to the cell membrane. The enzyme catalyses L-seryl-[protein] + ATP = O-phospho-L-seryl-[protein] + ADP + H(+). The catalysed reaction is L-threonyl-[protein] + ATP = O-phospho-L-threonyl-[protein] + ADP + H(+). This Arabidopsis thaliana (Mouse-ear cress) protein is Probable LRR receptor-like serine/threonine-protein kinase IRK.